Consider the following 152-residue polypeptide: MKTPIEVKILDSRIGSEYPLPAYATPGSAGMDLRAMIETSLSVAPGETRLIPTGISIHVADPSLAAVILPRSGLGHKHGIVLGNLVGLIDSDYQGPLMVSCWNRGDKPYTIEIGDRLAQLVFVPVVQAEFKLVDEFDNSLRGEGGFGHSGTS.

Residues 71–73, Asn-84, 88–90, and Met-98 each bind substrate; these read RSG and LID.

Belongs to the dUTPase family. Mg(2+) is required as a cofactor.

It catalyses the reaction dUTP + H2O = dUMP + diphosphate + H(+). It functions in the pathway pyrimidine metabolism; dUMP biosynthesis; dUMP from dCTP (dUTP route): step 2/2. This enzyme is involved in nucleotide metabolism: it produces dUMP, the immediate precursor of thymidine nucleotides and it decreases the intracellular concentration of dUTP so that uracil cannot be incorporated into DNA. This is Deoxyuridine 5'-triphosphate nucleotidohydrolase from Shewanella woodyi (strain ATCC 51908 / MS32).